The primary structure comprises 404 residues: Phosphopentomutase (404 aa).

Mn(2+) is bound by residues aspartate 10, aspartate 303, histidine 308, aspartate 344, histidine 345, and histidine 356.

It belongs to the phosphopentomutase family. Requires Mn(2+) as cofactor.

It localises to the cytoplasm. It carries out the reaction 2-deoxy-alpha-D-ribose 1-phosphate = 2-deoxy-D-ribose 5-phosphate. The catalysed reaction is alpha-D-ribose 1-phosphate = D-ribose 5-phosphate. The protein operates within carbohydrate degradation; 2-deoxy-D-ribose 1-phosphate degradation; D-glyceraldehyde 3-phosphate and acetaldehyde from 2-deoxy-alpha-D-ribose 1-phosphate: step 1/2. Functionally, isomerase that catalyzes the conversion of deoxy-ribose 1-phosphate (dRib-1-P) and ribose 1-phosphate (Rib-1-P) to deoxy-ribose 5-phosphate (dRib-5-P) and ribose 5-phosphate (Rib-5-P), respectively. The protein is Phosphopentomutase of Shewanella sp. (strain ANA-3).